Reading from the N-terminus, the 1019-residue chain is Serine/threonine-protein kinase 31 (1019 aa).

The Tudor domain occupies 78 to 137 (NLDPNKIYGGLFSEDQCWYRCKVLKIISVEKCLVRYIDYGNTEILNRSDIVEIPLELQFS). A coiled-coil region spans residues 298–355 (EKIKQDQKLIEENEKLKTEKDALLESYKALELKVEQIAQELQQEKAAAVDLTNHLEYT). A Protein kinase domain is found at 710–1019 (IGLLKYMNSG…TRNGEANFDC (310 aa)). ATP is bound by residues 716–724 (MNSGGLLTM) and Lys737.

This sequence belongs to the protein kinase superfamily. Ser/Thr protein kinase family. Testis specific.

The catalysed reaction is L-seryl-[protein] + ATP = O-phospho-L-seryl-[protein] + ADP + H(+). It catalyses the reaction L-threonyl-[protein] + ATP = O-phospho-L-threonyl-[protein] + ADP + H(+). This Homo sapiens (Human) protein is Serine/threonine-protein kinase 31 (STK31).